Consider the following 86-residue polypeptide: Large ribosomal subunit protein bL27 (86 aa).

The disordered stretch occupies residues 1 to 22; sequence MAHKKAGGSTRNGRDSESKRLG.

This sequence belongs to the bacterial ribosomal protein bL27 family.

The polypeptide is Large ribosomal subunit protein bL27 (Vibrio cholerae serotype O1 (strain ATCC 39315 / El Tor Inaba N16961)).